The following is a 121-amino-acid chain: MARIAGIDIPREKRVEVALTYIYGVGLTRAKSILAKAGVNPDIRVKDLDDGDVQKLRTAVESFTLEGDLRRQEGMALKRLQDIGCLRGRRHRMSLPVRGQRTRTNARTRRGSRKTVAGRKK.

The tract at residues 91–121 (HRMSLPVRGQRTRTNARTRRGSRKTVAGRKK) is disordered. The span at 100-121 (QRTRTNARTRRGSRKTVAGRKK) shows a compositional bias: basic residues.

It belongs to the universal ribosomal protein uS13 family. As to quaternary structure, part of the 30S ribosomal subunit. Forms a loose heterodimer with protein S19. Forms two bridges to the 50S subunit in the 70S ribosome.

In terms of biological role, located at the top of the head of the 30S subunit, it contacts several helices of the 16S rRNA. In the 70S ribosome it contacts the 23S rRNA (bridge B1a) and protein L5 of the 50S subunit (bridge B1b), connecting the 2 subunits; these bridges are implicated in subunit movement. Contacts the tRNAs in the A and P-sites. The protein is Small ribosomal subunit protein uS13 of Prochlorococcus marinus (strain MIT 9211).